The following is a 339-amino-acid chain: Ketol-acid reductoisomerase (NADP(+)) (339 aa).

The KARI N-terminal Rossmann domain occupies 1 to 182; it reads MRVYYDRDAD…GGGRAGIIET (182 aa). NADP(+) is bound by residues 24–27, Arg-48, Ser-51, Thr-53, and 83–86; these read YGSQ and DELQ. The active site involves His-108. Gly-134 serves as a coordination point for NADP(+). In terms of domain architecture, KARI C-terminal knotted spans 183–328; sequence SFKEECETDL…AKLRDMMPWI (146 aa). Positions 191, 195, 227, and 231 each coordinate Mg(2+). Ser-252 lines the substrate pocket.

The protein belongs to the ketol-acid reductoisomerase family. It depends on Mg(2+) as a cofactor.

The catalysed reaction is (2R)-2,3-dihydroxy-3-methylbutanoate + NADP(+) = (2S)-2-acetolactate + NADPH + H(+). The enzyme catalyses (2R,3R)-2,3-dihydroxy-3-methylpentanoate + NADP(+) = (S)-2-ethyl-2-hydroxy-3-oxobutanoate + NADPH + H(+). It participates in amino-acid biosynthesis; L-isoleucine biosynthesis; L-isoleucine from 2-oxobutanoate: step 2/4. The protein operates within amino-acid biosynthesis; L-valine biosynthesis; L-valine from pyruvate: step 2/4. Involved in the biosynthesis of branched-chain amino acids (BCAA). Catalyzes an alkyl-migration followed by a ketol-acid reduction of (S)-2-acetolactate (S2AL) to yield (R)-2,3-dihydroxy-isovalerate. In the isomerase reaction, S2AL is rearranged via a Mg-dependent methyl migration to produce 3-hydroxy-3-methyl-2-ketobutyrate (HMKB). In the reductase reaction, this 2-ketoacid undergoes a metal-dependent reduction by NADPH to yield (R)-2,3-dihydroxy-isovalerate. This chain is Ketol-acid reductoisomerase (NADP(+)), found in Rhodopseudomonas palustris (strain HaA2).